The following is an 88-amino-acid chain: Small ribosomal subunit protein uS17c (88 aa).

This sequence belongs to the universal ribosomal protein uS17 family. As to quaternary structure, part of the 30S ribosomal subunit.

The protein localises to the plastid. It is found in the cyanelle. One of the primary rRNA binding proteins, it binds specifically to the 5'-end of 16S ribosomal RNA. This is Small ribosomal subunit protein uS17c (rps17) from Cyanophora paradoxa.